Consider the following 457-residue polypeptide: Adenylosuccinate synthetase isozyme 2 A (457 aa).

Residues 40-46 (GDEGKGK) and 68-70 (GHT) contribute to the GTP site. Catalysis depends on aspartate 41, which acts as the Proton acceptor. Residues aspartate 41 and glycine 68 each coordinate Mg(2+). Aspartate 41 is a binding site for substrate. IMP contacts are provided by residues 41-44 (DEGK), 66-69 (NAGH), threonine 163, arginine 177, asparagine 256, threonine 271, and arginine 335. Residue histidine 69 is the Proton donor of the active site. 331 to 337 (VTTGRKR) is a binding site for substrate. Residues arginine 337, 363-365 (KLD), and 445-448 (GVGK) contribute to the GTP site.

The protein belongs to the adenylosuccinate synthetase family. As to quaternary structure, homodimer. It depends on Mg(2+) as a cofactor.

The protein localises to the cytoplasm. Its subcellular location is the mitochondrion. It catalyses the reaction IMP + L-aspartate + GTP = N(6)-(1,2-dicarboxyethyl)-AMP + GDP + phosphate + 2 H(+). It functions in the pathway purine metabolism; AMP biosynthesis via de novo pathway; AMP from IMP: step 1/2. With respect to regulation, inhibited competitively by AMP and IMP and non-competitively by fructose 1,6-bisphosphate. Functionally, plays an important role in the de novo pathway and in the salvage pathway of purine nucleotide biosynthesis. Catalyzes the first committed step in the biosynthesis of AMP from IMP. The chain is Adenylosuccinate synthetase isozyme 2 A (adss2-a) from Xenopus tropicalis (Western clawed frog).